Reading from the N-terminus, the 165-residue chain is Transcription factor zip-10 (165 aa).

The segment covering 53–71 (ASLGTSTTSSSRCSSTESS) has biased composition (low complexity). The disordered stretch occupies residues 53-99 (ASLGTSTTSSSRCSSTESSAAPGKIRRGRPQQEIADGQDAHSQKKRH). A coiled-coil region spans residues 104-150 (ARQYRAQMRQKVENVKSLHDEKEQLELEVKALRQAVSGLQQENAQKD).

It localises to the nucleus. In terms of biological role, transcription factor that regulates the expression of genes in response to changes in temperature. In particular, binds to the promoter region of genes such as asp-17 in response to severe cold to warm temperature transitions to promote gene expression. Promotes stress-induced death, particularly in older animals, following cold shock followed by warming and this may have evolved as a form of kin survival under thermal stress conditions, favoring the survival of younger animals. This chain is Transcription factor zip-10, found in Caenorhabditis elegans.